Consider the following 343-residue polypeptide: Heat-inducible transcription repressor HrcA (343 aa).

It belongs to the HrcA family.

Negative regulator of class I heat shock genes (grpE-dnaK-dnaJ and groELS operons). Prevents heat-shock induction of these operons. This chain is Heat-inducible transcription repressor HrcA, found in Natranaerobius thermophilus (strain ATCC BAA-1301 / DSM 18059 / JW/NM-WN-LF).